The following is a 357-amino-acid chain: Sorbitol dehydrogenase 1 (357 aa).

Cysteine 43 serves as a coordination point for Zn(2+). Residue tyrosine 49 coordinates substrate. Zn(2+) is bound by residues histidine 68 and glutamate 69. Glutamate 154 provides a ligand contact to substrate. NAD(+) contacts are provided by residues aspartate 202, lysine 207, 275-277, and 299-301; these read VGM and CFR. Residues arginine 301 and tyrosine 302 each coordinate substrate.

This sequence belongs to the zinc-containing alcohol dehydrogenase family. As to quaternary structure, homotetramer. Requires Zn(2+) as cofactor.

The catalysed reaction is keto-D-fructose + NADH + H(+) = D-sorbitol + NAD(+). It carries out the reaction xylitol + NAD(+) = D-xylulose + NADH + H(+). Functionally, polyol dehydrogenase that catalyzes the reversible NAD(+)-dependent oxidation of various sugar alcohols. Is active with D-sorbitol (D-glucitol) and xylitol as substrates, leading to the C2-oxidized product D-fructose and D-xylulose, respectively. Is likely involved in the utilization of D-sorbitol as a sole carbon source for growth. Has no activity on mannitol and primary alcohols such as ethanol. This Saccharomyces cerevisiae (strain ATCC 204508 / S288c) (Baker's yeast) protein is Sorbitol dehydrogenase 1 (SOR1).